A 498-amino-acid chain; its full sequence is MSEQNQAADAQQDENKLIAERRAKLAELRAVGNPFPNDFRPTHHADALQQAHGSKEKAALEEAAMVVSVAGRVIRNRGAFMVLQDGSGQIQLYVTKEARGFAKSLDLGDIIGVSGVLHKSGKGDLYVNLDEYKLLTKALRPLPDKYHGLADQELRYRQRYVDLIANPEVRKTFLLRSRIVQFIRDYLNGREFLEVETPMLQAIPGGATARPFETHHNALDIDMYLRIAPELYLKRLVVGGFERVYEINRNFRNEGLSTRHNPEFTMLEFYQAYADYNDLMDLTEDMLRNLAQTVLGSTEVTATLGEDESVTYDFAKPFVRLSVFDSILHFNPDLKAEDIDSPESARAVAKNLGIPMKDNWGLGKVQIEIFEKTVEHRLIQPTFITEYPTEVSPLARRNDDNPFVTDRFEFFVGGREIANGFSELNDAEDQADRFKQQVAEKNAGDDEAMHYDADYVRALEYGLPPTAGEGIGIDRLVMLLTDSASIRDVLLFPHMRPE.

2 residues coordinate Mg(2+): Glu409 and Glu416.

It belongs to the class-II aminoacyl-tRNA synthetase family. In terms of assembly, homodimer. The cofactor is Mg(2+).

It localises to the cytoplasm. The enzyme catalyses tRNA(Lys) + L-lysine + ATP = L-lysyl-tRNA(Lys) + AMP + diphosphate. The chain is Lysine--tRNA ligase from Teredinibacter turnerae (strain ATCC 39867 / T7901).